The sequence spans 215 residues: Protein FAM27D1 (215 aa).

The disordered stretch occupies residues 74–172 (QPKTHTHTGM…RGTQADLSSR (99 aa)). The span at 87–108 (THRERERNTQRLRDRERRENGR) shows a compositional bias: basic and acidic residues. Positions 109-122 (HTHRHTHTLTHTHT) are enriched in basic residues. 2 stretches are compositionally biased toward basic and acidic residues: residues 123-139 (HRDTHTASYRRGIETHT) and 149-162 (SAHDENDPRVREQP). Residues 163–172 (RGTQADLSSR) show a composition bias toward polar residues.

This sequence belongs to the FAM27 family.

In Homo sapiens (Human), this protein is Protein FAM27D1 (FAM27D1).